A 179-amino-acid chain; its full sequence is ECF RNA polymerase sigma factor SigF (179 aa).

The tract at residues 33–93 is sigma-70 factor domain-2; it reads RLRAYFMRRM…KLIDHWRRRK (61 aa). A Polymerase core binding motif is present at residues 51-64; that stretch reads DLVQETLLAVHLKR. A sigma-70 factor domain-4 region spans residues 123-170; the sequence is ALASLPQRQRMLVSDVKLTGLSLAEAGARAGISEGAAKVALHRALKAL. A DNA-binding region (H-T-H motif) is located at residues 145–164; that stretch reads LAEAGARAGISEGAAKVALH.

It belongs to the sigma-70 factor family. ECF subfamily.

The protein localises to the cytoplasm. Sigma factors are initiation factors that promote the attachment of RNA polymerase to specific initiation sites and are then released. Extracytoplasmic function (ECF) sigma factors are held in an inactive form by a cognate anti-sigma factor (NrsF in this case) until they are released. Up-regulates expression of 4 operons (sigF-nrsF, CCNA_02834, CCNA_03001 to CCNA_02999 and CCNA_03363 to CCNA_03366) in response to potassium dichromate (K(2)Cr(2)O(7)) or cadmium chloride (CdCl(2)). Overexpression of sigF leads to higher expression of its regulon. This is ECF RNA polymerase sigma factor SigF from Caulobacter vibrioides (strain NA1000 / CB15N) (Caulobacter crescentus).